We begin with the raw amino-acid sequence, 228 residues long: UPF0758 protein NT01CX_1687 (228 aa).

One can recognise an MPN domain in the interval 106–228 (IIKSPGDVAG…YISLKEKNIL (123 aa)). The Zn(2+) site is built by His-177, His-179, and Asp-190. Positions 177–190 (HNHPSGDPTPSSED) match the JAMM motif motif.

Belongs to the UPF0758 family.

This is UPF0758 protein NT01CX_1687 from Clostridium novyi (strain NT).